We begin with the raw amino-acid sequence, 1167 residues long: Topoisomerase 1-associated factor 1 (1167 aa).

Disordered regions lie at residues 332–353, 563–594, 889–969, 981–1093, and 1105–1167; these read SKRW…NNDF, SRRR…DYAE, KYSH…LENT, YVHA…DAID, and FDDD…SDSE. The span at 572–582 shows a compositional bias: basic and acidic residues; it reads REEQLVNKGSD. Acidic residues-rich tracts occupy residues 583 to 593 and 949 to 958; these read EEQESEDEDYA and EEEPVDEETL. Composition is skewed to basic and acidic residues over residues 959-969 and 996-1013; these read EERRQARLENT and EFFR…ERIK. The span at 1062-1074 shows a compositional bias: acidic residues; that stretch reads ELEEDDILMDDME. Positions 1078-1088 are enriched in polar residues; that stretch reads RASSGEYSSND. Residues 1110 to 1127 are compositionally biased toward basic and acidic residues; it reads AFGRDRDKDETSVDRDGA.

It belongs to the timeless family.

It is found in the nucleus. Functionally, involved in chromosome segregation during meiosis and DNA damage repair. The sequence is that of Topoisomerase 1-associated factor 1 (tof1) from Emericella nidulans (strain FGSC A4 / ATCC 38163 / CBS 112.46 / NRRL 194 / M139) (Aspergillus nidulans).